Consider the following 369-residue polypeptide: Phenylalanine--tRNA ligase alpha subunit (369 aa).

Residue E269 coordinates Mg(2+).

It belongs to the class-II aminoacyl-tRNA synthetase family. Phe-tRNA synthetase alpha subunit type 1 subfamily. Tetramer of two alpha and two beta subunits. Mg(2+) serves as cofactor.

The protein resides in the cytoplasm. The enzyme catalyses tRNA(Phe) + L-phenylalanine + ATP = L-phenylalanyl-tRNA(Phe) + AMP + diphosphate + H(+). The polypeptide is Phenylalanine--tRNA ligase alpha subunit (Brucella ovis (strain ATCC 25840 / 63/290 / NCTC 10512)).